We begin with the raw amino-acid sequence, 256 residues long: Isoprenyl transferase 1 (256 aa).

Residue D34 is part of the active site. D34 is a Mg(2+) binding site. Residues 35 to 38 (GNRR), W39, H52, and 80 to 82 (STE) each bind substrate. N83 (proton acceptor) is an active-site residue. Substrate contacts are provided by residues R86, R205, and 211–213 (RLS). E224 is a Mg(2+) binding site.

Belongs to the UPP synthase family. As to quaternary structure, homodimer. Mg(2+) serves as cofactor.

In terms of biological role, catalyzes the condensation of isopentenyl diphosphate (IPP) with allylic pyrophosphates generating different type of terpenoids. The polypeptide is Isoprenyl transferase 1 (Corynebacterium efficiens (strain DSM 44549 / YS-314 / AJ 12310 / JCM 11189 / NBRC 100395)).